The primary structure comprises 71 residues: MKSVIFALFLVYLLIVRAAEANENIGLGLDRGSSGTIAAKQQMGIELANDPNGPGRRRRAPAENEDFLKHS.

A signal peptide spans 1-21 (MKSVIFALFLVYLLIVRAAEA). The tract at residues 45 to 71 (IELANDPNGPGRRRRAPAENEDFLKHS) is disordered. Residues 60–71 (APAENEDFLKHS) are compositionally biased toward basic and acidic residues.

Belongs to the scoloptoxin-21 family. In terms of tissue distribution, expressed by the venom gland.

The protein resides in the secreted. The sequence is that of U-scoloptoxin(21)-Sm1a from Scolopendra morsitans (Tanzanian blue ringleg centipede).